A 496-amino-acid chain; its full sequence is Glycerol kinase (496 aa).

ADP is bound at residue Thr12. Residues Thr12, Thr13, and Ser14 each coordinate ATP. Residue Thr12 coordinates sn-glycerol 3-phosphate. Position 16 (Arg16) interacts with ADP. Arg82, Glu83, and Tyr134 together coordinate sn-glycerol 3-phosphate. Positions 82, 83, and 134 each coordinate glycerol. Phosphohistidine; by HPr is present on His230. Asp244 provides a ligand contact to sn-glycerol 3-phosphate. Positions 244 and 245 each coordinate glycerol. ADP is bound by residues Thr266 and Gly309. The ATP site is built by Thr266, Gly309, Gln313, and Gly410. Residues Gly410 and Asn414 each coordinate ADP.

It belongs to the FGGY kinase family. Homotetramer and homodimer (in equilibrium). The phosphoenolpyruvate-dependent sugar phosphotransferase system (PTS), including enzyme I, and histidine-containing protein (HPr) are required for the phosphorylation, which leads to the activation of the enzyme.

It carries out the reaction glycerol + ATP = sn-glycerol 3-phosphate + ADP + H(+). It functions in the pathway polyol metabolism; glycerol degradation via glycerol kinase pathway; sn-glycerol 3-phosphate from glycerol: step 1/1. With respect to regulation, activated by phosphorylation and inhibited by fructose 1,6-bisphosphate (FBP). Its function is as follows. Key enzyme in the regulation of glycerol uptake and metabolism. Catalyzes the phosphorylation of glycerol to yield sn-glycerol 3-phosphate. In Bacillus cereus (strain ATCC 14579 / DSM 31 / CCUG 7414 / JCM 2152 / NBRC 15305 / NCIMB 9373 / NCTC 2599 / NRRL B-3711), this protein is Glycerol kinase.